Reading from the N-terminus, the 750-residue chain is Mitochondrial 15S rRNA processing factor CCM1 (750 aa).

Residues 1–82 (MFIGKKAPAA…KELKQLTRSV (82 aa)) constitute a mitochondrion transit peptide. PPR repeat units follow at residues 263–297 (SRAT…GLQL), 298–333 (SPVV…AGSM), 336–370 (QTRE…KLDF), and 371–406 (NQNI…GWEP).

This sequence belongs to the CCM1 family. Binds to mitochondrial small subunit 15S rRNA.

Its subcellular location is the mitochondrion. Functionally, regulates mitochondrial small subunit maturation by controlling 15S rRNA 5'-end processing. Localizes to the 5' precursor of the 15S rRNA in a position that is subsequently occupied by mS47 in the mature yeast mtSSU. Uses structure and sequence-specific RNA recognition, binding to a single-stranded region of the precursor and specifically recognizing bases -6 to -1. The exchange of Ccm1 for mS47 is coupled to the irreversible removal of precursor rRNA that is accompanied by conformational changes of the mitoribosomal proteins uS5m and mS26. These conformational changes signal completion of 5'-end rRNA processing through protection of the mature 5'-end of the 15S rRNA and stabilization of mS47. The removal of the 5' precursor together with the dissociation of Ccm1 may be catalyzed by the 5'-3' exoribonuclease Pet127. Involved in the specific removal of group I introns in mitochondrial encoded transcripts. The polypeptide is Mitochondrial 15S rRNA processing factor CCM1 (CCM1) (Clavispora lusitaniae (strain ATCC 42720) (Yeast)).